We begin with the raw amino-acid sequence, 102 residues long: MQNQKIRIRLKAFDYRLIDKSAVEIVETAKRTGAVVKGPVPLPTRIERFDVLRSPHVNKTSRDQFEIRTHLRLMDIIDPTDKTVDALMKLDLPAGVDVEIKL.

The protein belongs to the universal ribosomal protein uS10 family. As to quaternary structure, part of the 30S ribosomal subunit.

In terms of biological role, involved in the binding of tRNA to the ribosomes. In Nitrosomonas eutropha (strain DSM 101675 / C91 / Nm57), this protein is Small ribosomal subunit protein uS10.